Here is a 398-residue protein sequence, read N- to C-terminus: Phospholipase C (398 aa).

Positions 1–28 are cleaved as a signal peptide; the sequence is MKKKFLKGLCCAFVISITCLGASSKAYG. Residues W29, H39, D84, H96, H154, D158, H164, H176, and E180 each coordinate Zn(2+). Residues 29 to 278 enclose the Zn-dependent PLC domain; it reads WDGKKDGTGT…YDVSKDLLPT (250 aa). The segment at 275 to 283 is linker; sequence LLPTENHKI. The PLAT domain occupies 284-398; it reads NGLMVVIKTA…IHGNEKYYIN (115 aa). Ca(2+) is bound by residues G299, T300, D301, D321, N322, G324, N325, D326, and D364.

Belongs to the bacterial zinc-metallophospholipase C family. The cofactor is Ca(2+). It depends on Zn(2+) as a cofactor.

The protein resides in the secreted. It catalyses the reaction a 1,2-diacyl-sn-glycero-3-phosphocholine + H2O = phosphocholine + a 1,2-diacyl-sn-glycerol + H(+). Functionally, bacterial hemolysins are exotoxins that attack blood cell membranes and cause cell rupture. Binds to eukaryotic membranes where it hydrolyzes phosphatidylcholine, sphingomyelin and phosphatidylethanolamine. The diacylglycerol produced can activate both the arachidonic acid pathway, leading to modulation of the inflammatory response cascade and thrombosis, and protein kinase C, leading to activation of eukaryotic phospholipases and further membrane damage. This enzyme is hemolytic against horse erythrocytes. The sequence is that of Phospholipase C (plc) from Clostridium novyi.